We begin with the raw amino-acid sequence, 365 residues long: uncharacterized protein (365 aa).

It belongs to the mycobacterial PPE family.

This is an uncharacterized protein from Mycobacterium tuberculosis (strain ATCC 25618 / H37Rv).